Reading from the N-terminus, the 340-residue chain is tRNA N6-adenosine threonylcarbamoyltransferase (340 aa).

2 residues coordinate Fe cation: H115 and H119. Residues 138–142 (VVSGG), D171, G184, D188, and N278 contribute to the substrate site. Fe cation is bound at residue D306.

The protein belongs to the KAE1 / TsaD family. Fe(2+) serves as cofactor.

It is found in the cytoplasm. It catalyses the reaction L-threonylcarbamoyladenylate + adenosine(37) in tRNA = N(6)-L-threonylcarbamoyladenosine(37) in tRNA + AMP + H(+). Required for the formation of a threonylcarbamoyl group on adenosine at position 37 (t(6)A37) in tRNAs that read codons beginning with adenine. Is involved in the transfer of the threonylcarbamoyl moiety of threonylcarbamoyl-AMP (TC-AMP) to the N6 group of A37, together with TsaE and TsaB. TsaD likely plays a direct catalytic role in this reaction. This is tRNA N6-adenosine threonylcarbamoyltransferase from Clostridium botulinum (strain Hall / ATCC 3502 / NCTC 13319 / Type A).